Consider the following 100-residue polypeptide: Urease subunit gamma (100 aa).

The protein belongs to the urease gamma subunit family. In terms of assembly, heterotrimer of UreA (gamma), UreB (beta) and UreC (alpha) subunits. Three heterotrimers associate to form the active enzyme.

It is found in the cytoplasm. The catalysed reaction is urea + 2 H2O + H(+) = hydrogencarbonate + 2 NH4(+). Its pathway is nitrogen metabolism; urea degradation; CO(2) and NH(3) from urea (urease route): step 1/1. The sequence is that of Urease subunit gamma from Pseudarthrobacter chlorophenolicus (strain ATCC 700700 / DSM 12829 / CIP 107037 / JCM 12360 / KCTC 9906 / NCIMB 13794 / A6) (Arthrobacter chlorophenolicus).